Reading from the N-terminus, the 419-residue chain is UDP-N-acetylglucosamine 1-carboxyvinyltransferase 2 (419 aa).

Residue 24 to 25 (KN) coordinates phosphoenolpyruvate. Arg94 is a binding site for UDP-N-acetyl-alpha-D-glucosamine. Cys118 functions as the Proton donor in the catalytic mechanism. Cys118 carries the 2-(S-cysteinyl)pyruvic acid O-phosphothioketal modification. Residues 123-127 (RPIDQ), Asp307, and Ile329 each bind UDP-N-acetyl-alpha-D-glucosamine.

The protein belongs to the EPSP synthase family. MurA subfamily.

The protein localises to the cytoplasm. The enzyme catalyses phosphoenolpyruvate + UDP-N-acetyl-alpha-D-glucosamine = UDP-N-acetyl-3-O-(1-carboxyvinyl)-alpha-D-glucosamine + phosphate. Its pathway is cell wall biogenesis; peptidoglycan biosynthesis. Functionally, cell wall formation. Adds enolpyruvyl to UDP-N-acetylglucosamine. The protein is UDP-N-acetylglucosamine 1-carboxyvinyltransferase 2 of Staphylococcus aureus (strain bovine RF122 / ET3-1).